The following is a 210-amino-acid chain: MIKQPALAQEQYACVYAWLALLFFREVDDEGLIQLQSAEIADWLALLKRQPALAASVALLEQKIAALSLRQDAQLELAADFCGLFLMTDKKSALPYASQYPQQEPGMIKHLLLEAGMEVNDDFKEPADHLAIYLELLSHLHFSLGESFQQRRMNKLRQKTLSSLLEWLPEFTNNCLKHDPYGFYAALSQLLLAIVRFDDGKEDLSIVAVE.

It belongs to the TorD/DmsD family. TorD subfamily.

It localises to the cytoplasm. Involved in the biogenesis of TorA. Acts on TorA before the insertion of the molybdenum cofactor and, as a result, probably favors a conformation of the apoenzyme that is competent for acquiring the cofactor. The polypeptide is Chaperone protein TorD (Salmonella dublin (strain CT_02021853)).